Reading from the N-terminus, the 229-residue chain is Germin-like protein 3-6 (229 aa).

A signal peptide spans 1 to 31 (MEHSFKTIAAGVVIVVLLLQQAPVLIRATDA). Cys-38 and Cys-53 are joined by a disulfide. In terms of domain architecture, Cupin type-1 spans 67 to 219 (SKIATGGDVN…ALRVDAGVVE (153 aa)). N-linked (GlcNAc...) asparagine glycosylation is found at Asn-80 and Asn-83. 4 residues coordinate Mn(2+): His-116, His-118, Glu-123, and His-165.

It belongs to the germin family. As to quaternary structure, oligomer (believed to be a pentamer but probably hexamer).

The protein resides in the secreted. Its subcellular location is the extracellular space. The protein localises to the apoplast. Functionally, may play a role in plant defense. Probably has no oxalate oxidase activity even if the active site is conserved. This chain is Germin-like protein 3-6, found in Oryza sativa subsp. japonica (Rice).